The primary structure comprises 131 residues: Small ribosomal subunit protein uS8 (131 aa).

Belongs to the universal ribosomal protein uS8 family. As to quaternary structure, part of the 30S ribosomal subunit. Contacts proteins S5 and S12.

One of the primary rRNA binding proteins, it binds directly to 16S rRNA central domain where it helps coordinate assembly of the platform of the 30S subunit. In Wolbachia pipientis wMel, this protein is Small ribosomal subunit protein uS8.